A 282-amino-acid polypeptide reads, in one-letter code: MQEIFLCSISNVRSGDCKEDCAYCTQSSHHQGAIKRYKFKDEKVVLQEARALRQLGALGFCLVTSGRELDDEKCEYIAKLAKAINQEELGLHLIACCGRADLEQLEFLRDAGIHSYNHNLETSQNFFPKICSTHTWEERFITCENALRAGLGLCSGGIFGLNESWEDRIEMLRALASLSPHTTPINFFIKNPVLPIDAETLSADEALECVLLAKEFLPNARLMVAGGREVVFKDNDKKEAKLFEYGINAVVLGDYLTTKGKAPKKDIEKLLSYGLTMATSCH.

The Radical SAM core domain occupies 1 to 228 (MQEIFLCSIS…NARLMVAGGR (228 aa)). Residues cysteine 17, cysteine 21, and cysteine 24 each contribute to the [4Fe-4S] cluster site. Residues cysteine 61, cysteine 96, cysteine 154, and arginine 221 each coordinate [2Fe-2S] cluster.

Belongs to the radical SAM superfamily. Biotin synthase family. As to quaternary structure, homodimer. [4Fe-4S] cluster is required as a cofactor. [2Fe-2S] cluster serves as cofactor.

It catalyses the reaction (4R,5S)-dethiobiotin + (sulfur carrier)-SH + 2 reduced [2Fe-2S]-[ferredoxin] + 2 S-adenosyl-L-methionine = (sulfur carrier)-H + biotin + 2 5'-deoxyadenosine + 2 L-methionine + 2 oxidized [2Fe-2S]-[ferredoxin]. It participates in cofactor biosynthesis; biotin biosynthesis; biotin from 7,8-diaminononanoate: step 2/2. Its function is as follows. Catalyzes the conversion of dethiobiotin (DTB) to biotin by the insertion of a sulfur atom into dethiobiotin via a radical-based mechanism. This chain is Biotin synthase, found in Helicobacter pylori (strain ATCC 700392 / 26695) (Campylobacter pylori).